Reading from the N-terminus, the 164-residue chain is UPF0114 protein YqhA (164 aa).

A run of 3 helical transmembrane segments spans residues 15-35 (LLAP…LKFF), 53-73 (LILV…LVMV), and 136-156 (LMWY…MGYL).

The protein belongs to the UPF0114 family.

The protein localises to the cell membrane. The sequence is that of UPF0114 protein YqhA from Salmonella dublin (strain CT_02021853).